The sequence spans 368 residues: P2X receptor C (368 aa).

Residues 1–24 (MLDWDSILAYNTIKVVRIRDRRLG) are Cytoplasmic-facing. The chain crosses the membrane as a helical span at residues 25-45 (ILHLIFMIAIISYVVIYSAII). The Lumenal segment spans residues 46-368 (KKGYLSIEEP…DKLYHNIEAL (323 aa)). A pore-forming motif region spans residues 282–295 (RHAIRLIFIQTGVI).

The protein belongs to the P2X receptor family.

The protein resides in the contractile vacuole membrane. P2X receptors are ligand-gated ion channels that play a role in intracellular calcium signaling. ATP does not evoke inward currents in p2xC. Not essential for osmoregulation. In Dictyostelium discoideum (Social amoeba), this protein is P2X receptor C (p2xC).